The primary structure comprises 178 residues: Leukemia NUP98 fusion partner 1 (178 aa).

Disordered stretches follow at residues 28–55 (EDQR…PLPV), 89–108 (SEDG…HSKI), and 147–178 (IKSR…KGPE). Positions 34–47 (RERHRLQATSHRKT) are enriched in basic residues. Residues 147 to 167 (IKSRKKVEEERSSRKEEHGEA) are compositionally biased toward basic and acidic residues.

This Homo sapiens (Human) protein is Leukemia NUP98 fusion partner 1 (LNP1).